Reading from the N-terminus, the 495-residue chain is N-succinylglutamate 5-semialdehyde dehydrogenase (495 aa).

228–233 (GSYATG) serves as a coordination point for NAD(+). Active-site residues include E251 and C285.

It belongs to the aldehyde dehydrogenase family. AstD subfamily.

It carries out the reaction N-succinyl-L-glutamate 5-semialdehyde + NAD(+) + H2O = N-succinyl-L-glutamate + NADH + 2 H(+). Its pathway is amino-acid degradation; L-arginine degradation via AST pathway; L-glutamate and succinate from L-arginine: step 4/5. Catalyzes the NAD-dependent reduction of succinylglutamate semialdehyde into succinylglutamate. The sequence is that of N-succinylglutamate 5-semialdehyde dehydrogenase from Legionella pneumophila (strain Paris).